Here is a 166-residue protein sequence, read N- to C-terminus: Putative pre-16S rRNA nuclease (166 aa).

It belongs to the YqgF nuclease family.

The protein resides in the cytoplasm. In terms of biological role, could be a nuclease involved in processing of the 5'-end of pre-16S rRNA. The polypeptide is Putative pre-16S rRNA nuclease (Mesorhizobium japonicum (strain LMG 29417 / CECT 9101 / MAFF 303099) (Mesorhizobium loti (strain MAFF 303099))).